A 393-amino-acid polypeptide reads, in one-letter code: MSFSLSEWLWQETYWLPPNVTWAELEDRDGLVFAHPHHVLAAFPVALVLVAVRIVFERFVALPLSRWMGVQDPIRRKIKPNPVLEKYFLRMKQCPEETQMVLLASQCGLTLRQTQRWFRRRRNQDRPSLSKKFCEACWRFVFYLCSFVGGTSILYHESWLWSPSLCWENYPHQTLNLSLYWWYLLELGFYLSLLITLPFDVKRKDFKEQVVHHFVAVGLIGFSYSVNLLRIGAVVLLLHDCSDYLLEGCKILNYAHFRRGCDALFIMFALVFFYTRLIFFPTQVIYTSVYDSIKNSGPFFGYYFFIVLLVMLQILHVYWFCLILRMLYSFLHKGQMTEDIRSDVEEPDSSDDEPVSEGPQLKNGMARGSRVAVTNGPRSRAAACLTNGHTRAT.

At 1-31 the chain is on the lumenal side; that stretch reads MSFSLSEWLWQETYWLPPNVTWAELEDRDGL. The N-linked (GlcNAc...) asparagine glycan is linked to N19. Residues 32-52 form a helical membrane-spanning segment; the sequence is VFAHPHHVLAAFPVALVLVAV. Positions 67-128 are homeobox-like; the sequence is WMGVQDPIRR…RRRRNQDRPS (62 aa). A TLC domain is found at 131–332; the sequence is KKFCEACWRF…ILRMLYSFLH (202 aa). Transmembrane regions (helical) follow at residues 140–160, 179–199, 217–237, and 265–285; these read FVFY…ESWL, LYWW…TLPF, VGLI…VVLL, and FIMF…TQVI. Positions 291-301 match the Last loop motif motif; it reads DSIKNSGPFFG. The chain crosses the membrane as a helical span at residues 304–324; that stretch reads FFIVLLVMLQILHVYWFCLIL. The Cytoplasmic segment spans residues 325 to 393; the sequence is RMLYSFLHKG…CLTNGHTRAT (69 aa). The tract at residues 341-393 is disordered; sequence RSDVEEPDSSDDEPVSEGPQLKNGMARGSRVAVTNGPRSRAAACLTNGHTRAT. Residues S342, S349, and S350 each carry the phosphoserine modification. The segment covering 345–355 has biased composition (acidic residues); the sequence is EEPDSSDDEPV.

In terms of processing, phosphorylated at the C-terminus by CK2. Ubiquitously expressed, with highest levels in skin.

It localises to the endoplasmic reticulum membrane. It catalyses the reaction sphinganine + octadecanoyl-CoA = N-(octadecanoyl)-sphinganine + CoA + H(+). It carries out the reaction eicosanoyl-CoA + sphinganine = N-eicosanoylsphinganine + CoA + H(+). The catalysed reaction is docosanoyl-CoA + sphinganine = N-docosanoylsphinganine + CoA + H(+). The enzyme catalyses tetracosanoyl-CoA + sphinganine = N-tetracosanoylsphinganine + CoA + H(+). It catalyses the reaction hexacosanoyl-CoA + sphinganine = N-hexacosanoylsphinganine + CoA + H(+). It carries out the reaction a fatty acyl-CoA + sphing-4-enine = an N-acylsphing-4-enine + CoA + H(+). The catalysed reaction is sphing-4-enine + octadecanoyl-CoA = N-octadecanoylsphing-4-enine + CoA + H(+). The enzyme catalyses hexadecasphinganine + octadecanoyl-CoA = N-octadecanoylhexadecasphinganine + CoA + H(+). It functions in the pathway lipid metabolism; sphingolipid metabolism. In terms of biological role, ceramide synthase that catalyzes formation of ceramide from sphinganine and acyl-CoA substrates, with high selectivity toward long and very-long chains (C18:0-C22:0) as acyl donor. This chain is Ceramide synthase 4, found in Mus musculus (Mouse).